Reading from the N-terminus, the 263-residue chain is Sulfur carrier protein FdhD (263 aa).

The active-site Cysteine persulfide intermediate is Cys-107.

The protein belongs to the FdhD family.

Its subcellular location is the cytoplasm. In terms of biological role, required for formate dehydrogenase (FDH) activity. Acts as a sulfur carrier protein that transfers sulfur from IscS to the molybdenum cofactor prior to its insertion into FDH. This is Sulfur carrier protein FdhD from Geobacillus kaustophilus (strain HTA426).